Reading from the N-terminus, the 101-residue chain is Small ribosomal subunit protein uS14 (101 aa).

It belongs to the universal ribosomal protein uS14 family. In terms of assembly, part of the 30S ribosomal subunit. Contacts proteins S3 and S10.

In terms of biological role, binds 16S rRNA, required for the assembly of 30S particles and may also be responsible for determining the conformation of the 16S rRNA at the A site. The polypeptide is Small ribosomal subunit protein uS14 (Ehrlichia ruminantium (strain Welgevonden)).